We begin with the raw amino-acid sequence, 181 residues long: Peptide deformylase 2 (181 aa).

Fe cation-binding residues include Cys109 and His151. The active site involves Glu152. His155 serves as a coordination point for Fe cation.

This sequence belongs to the polypeptide deformylase family. Requires Fe(2+) as cofactor.

The catalysed reaction is N-terminal N-formyl-L-methionyl-[peptide] + H2O = N-terminal L-methionyl-[peptide] + formate. Removes the formyl group from the N-terminal Met of newly synthesized proteins. Requires at least a dipeptide for an efficient rate of reaction. N-terminal L-methionine is a prerequisite for activity but the enzyme has broad specificity at other positions. The chain is Peptide deformylase 2 from Shewanella oneidensis (strain ATCC 700550 / JCM 31522 / CIP 106686 / LMG 19005 / NCIMB 14063 / MR-1).